Reading from the N-terminus, the 1079-residue chain is Isoleucine--tRNA ligase (1079 aa).

Residues 53–63 (PFANGLPHYGH) carry the 'HIGH' region motif. Residues 611–615 (KLSKR) carry the 'KMSKS' region motif. K614 is an ATP binding site.

This sequence belongs to the class-I aminoacyl-tRNA synthetase family. IleS type 2 subfamily. As to quaternary structure, monomer. The cofactor is Zn(2+).

Its subcellular location is the cytoplasm. The catalysed reaction is tRNA(Ile) + L-isoleucine + ATP = L-isoleucyl-tRNA(Ile) + AMP + diphosphate. In terms of biological role, catalyzes the attachment of isoleucine to tRNA(Ile). As IleRS can inadvertently accommodate and process structurally similar amino acids such as valine, to avoid such errors it has two additional distinct tRNA(Ile)-dependent editing activities. One activity is designated as 'pretransfer' editing and involves the hydrolysis of activated Val-AMP. The other activity is designated 'posttransfer' editing and involves deacylation of mischarged Val-tRNA(Ile). This Rickettsia canadensis (strain McKiel) protein is Isoleucine--tRNA ligase.